We begin with the raw amino-acid sequence, 459 residues long: F-box protein At1g47340 (459 aa).

The 46-residue stretch at 31–76 folds into the F-box domain; that stretch reads FMVSVSLPKELILEILKRLPAKSVKRFHCVSKQWASMLSCPHFREL. The segment at 434–459 is disordered; that stretch reads AKIEWEEEEEEDEDEDQEKEEEDQWS. Residues 438–459 are compositionally biased toward acidic residues; that stretch reads WEEEEEEDEDEDQEKEEEDQWS.

This Arabidopsis thaliana (Mouse-ear cress) protein is F-box protein At1g47340.